Reading from the N-terminus, the 399-residue chain is MAFADYPVQSLMYITNRPEIVFTEGKGSWLTDHNGKRYLDFVQGWAVNCLGHSNDGMIEALNAQAKKLINPSPAFYNEPMAKLAGLLSAHSCFDKVFFANSGAEANEGAIKLARKWGKKHKSGAGKNRFEIITFDHSFHGRTLATMSASGKAGWDTIFAPQVPGFPKAILNDIASVEALITDETVGVMLEPVQGEGGVLPATQEFMQQLRALTRKHKLLLIVDEVQAGCGRCGTLFAYQLSNIEPDIMTLGKGIGGGVPLSALLCTDEVASFEAGDQGGTYNGNPLMTAVGCSVIEQLLAPGFLAGVQERGAYLRAQLLELSEAFGLAGERGEGLLRALLLGKDIGGQLVEAAREMNPTGLLLNAPRPNILRFMPALNVTTDEIDTMIGMLRTLLKAHG.

Pyridoxal 5'-phosphate-binding positions include 102–103 and F138; that span reads GA. N(2)-acetyl-L-ornithine is bound at residue R141. 223-226 provides a ligand contact to pyridoxal 5'-phosphate; that stretch reads DEVQ. Residue K252 is modified to N6-(pyridoxal phosphate)lysine. Pyridoxal 5'-phosphate is bound at residue T280.

Belongs to the class-III pyridoxal-phosphate-dependent aminotransferase family. ArgD subfamily. As to quaternary structure, homodimer. Pyridoxal 5'-phosphate is required as a cofactor.

It localises to the cytoplasm. The enzyme catalyses N(2)-acetyl-L-ornithine + 2-oxoglutarate = N-acetyl-L-glutamate 5-semialdehyde + L-glutamate. It functions in the pathway amino-acid biosynthesis; L-arginine biosynthesis; N(2)-acetyl-L-ornithine from L-glutamate: step 4/4. In Ralstonia nicotianae (strain ATCC BAA-1114 / GMI1000) (Ralstonia solanacearum), this protein is Acetylornithine aminotransferase.